Reading from the N-terminus, the 87-residue chain is Prolactin-releasing peptide (87 aa).

Positions 1–22 (MKVLRAWLLCLLMLGLALRGAA) are cleaved as a signal peptide. Phe-53 is subject to Phenylalanine amide. A propeptide spanning residues 58 to 87 (ATLGDVPKPGLRPRLTCFPLEGGAMSSQDG) is cleaved from the precursor.

As to expression, medulla oblongata and hypothalamus.

The protein resides in the secreted. In terms of biological role, stimulates prolactin (PRL) release and regulates the expression of prolactin through its receptor GPR10. May stimulate lactotrophs directly to secrete PRL. The sequence is that of Prolactin-releasing peptide (PRLH) from Homo sapiens (Human).